The following is a 387-amino-acid chain: uncharacterized protein (387 aa).

The disordered stretch occupies residues 1–23 (MSSLPRNAVARNSKMHKKRDSGV). Positions 98-129 (KIARDLKKRQEDYEKTKLEVERLKRSEELANK) form a coiled coil. The tract at residues 146-255 (ENNTVEPNNE…NKKKKKEKNK (110 aa)) is disordered. Low complexity-rich tracts occupy residues 162 to 175 (EQITEQTVEQTTEQ) and 182 to 194 (EQTTEKTTQQTAE). The segment covering 204 to 213 (TVEKSGDQST) has biased composition (basic and acidic residues). The segment covering 214–231 (EKTTQQTAEESVEQSTEQ) has biased composition (polar residues).

This is an uncharacterized protein from Acanthamoeba polyphaga mimivirus (APMV).